Here is a 256-residue protein sequence, read N- to C-terminus: Post-translational flagellin modification protein A (256 aa).

Residue Ser145 coordinates substrate. Tyr168 acts as the Proton acceptor in catalysis.

Belongs to the short-chain dehydrogenases/reductases (SDR) family.

Functionally, required for biosynthesis of LAH modification in the post-translational modification of Campylobacter coli flagellin. The sequence is that of Post-translational flagellin modification protein A (ptmA) from Campylobacter coli.